A 313-amino-acid polypeptide reads, in one-letter code: Phosphoenolpyruvate phosphomutase (313 aa).

A disordered region spans residues 1–23 (MNATERPGSDGTGSPESVGSRLK). Aspartate 69 functions as the Nucleophile in the catalytic mechanism.

Belongs to the isocitrate lyase/PEP mutase superfamily. PEP mutase family.

It catalyses the reaction phosphoenolpyruvate + H(+) = 3-phosphonopyruvate. It functions in the pathway secondary metabolite biosynthesis; bialaphos biosynthesis. Its function is as follows. Formation of a carbon-phosphorus bond by converting phosphoenolpyruvate (PEP) to phosphonopyruvate (P-Pyr). This chain is Phosphoenolpyruvate phosphomutase (ppm), found in Streptomyces viridochromogenes (strain DSM 40736 / JCM 4977 / BCRC 1201 / Tue 494).